The primary structure comprises 192 residues: Putative manganese efflux pump MntP (192 aa).

Helical transmembrane passes span 3–23, 38–58, 61–81, 101–121, 130–150, and 167–187; these read LIFT…AVSF, FILA…GWLL, GFAD…LFII, VFNF…ALAV, IVPL…SVGG, and ILGG…HLVW.

Belongs to the MntP (TC 9.B.29) family.

The protein localises to the cell membrane. Functionally, probably functions as a manganese efflux pump. The sequence is that of Putative manganese efflux pump MntP from Methanospirillum hungatei JF-1 (strain ATCC 27890 / DSM 864 / NBRC 100397 / JF-1).